The chain runs to 423 residues: Phosphoribosylamine--glycine ligase (423 aa).

An ATP-grasp domain is found at 107–312; the sequence is KDLCARYDIP…LLPILYATAT (206 aa). 133-193 provides a ligand contact to ATP; the sequence is VRAQGAPIVI…EAFLDGEEAS (61 aa). The Mg(2+) site is built by E282 and N284.

It belongs to the GARS family. Mg(2+) serves as cofactor. Requires Mn(2+) as cofactor.

The catalysed reaction is 5-phospho-beta-D-ribosylamine + glycine + ATP = N(1)-(5-phospho-beta-D-ribosyl)glycinamide + ADP + phosphate + H(+). The protein operates within purine metabolism; IMP biosynthesis via de novo pathway; N(1)-(5-phospho-D-ribosyl)glycinamide from 5-phospho-alpha-D-ribose 1-diphosphate: step 2/2. This chain is Phosphoribosylamine--glycine ligase, found in Agrobacterium fabrum (strain C58 / ATCC 33970) (Agrobacterium tumefaciens (strain C58)).